The primary structure comprises 122 residues: uncharacterized protein (122 aa).

Polar residues predominate over residues 1-10 (MGTGLRSQSL). The segment at 1–68 (MGTGLRSQSL…GQEWLPGSLG (68 aa)) is disordered. Residues 40-56 (QGREKSRSSDGGPERLD) are compositionally biased toward basic and acidic residues.

This is an uncharacterized protein from Bos taurus (Bovine).